The primary structure comprises 189 residues: Cancer/testis antigen family 45 member A1 (189 aa).

Basic and acidic residues predominate over residues 1-23 (MTDKTEKVAVDPETVFKRPRECD). Disordered regions lie at residues 1-27 (MTDK…SPSY) and 83-118 (RMMQ…SPKS).

This sequence belongs to the CT45 family. Testis specific. Expressed in cancer cell lines.

The protein localises to the nucleus. The polypeptide is Cancer/testis antigen family 45 member A1 (Homo sapiens (Human)).